The sequence spans 208 residues: Large ribosomal subunit protein uL4 (208 aa).

Positions 47–58 (ARAARERSDVAR) are enriched in basic and acidic residues. The interval 47–84 (ARAARERSDVARTGKKFGRQKGGGTARHGDRRAPIFIG) is disordered.

It belongs to the universal ribosomal protein uL4 family. In terms of assembly, part of the 50S ribosomal subunit.

Its function is as follows. One of the primary rRNA binding proteins, this protein initially binds near the 5'-end of the 23S rRNA. It is important during the early stages of 50S assembly. It makes multiple contacts with different domains of the 23S rRNA in the assembled 50S subunit and ribosome. Functionally, forms part of the polypeptide exit tunnel. The protein is Large ribosomal subunit protein uL4 of Sphingopyxis alaskensis (strain DSM 13593 / LMG 18877 / RB2256) (Sphingomonas alaskensis).